The chain runs to 338 residues: tRNA N6-adenosine threonylcarbamoyltransferase (338 aa).

Fe cation-binding residues include H111 and H115. Substrate contacts are provided by residues 134-138 (LVSGG), D167, G180, and N272. A Fe cation-binding site is contributed by D300.

Belongs to the KAE1 / TsaD family. The cofactor is Fe(2+).

It is found in the cytoplasm. It catalyses the reaction L-threonylcarbamoyladenylate + adenosine(37) in tRNA = N(6)-L-threonylcarbamoyladenosine(37) in tRNA + AMP + H(+). Functionally, required for the formation of a threonylcarbamoyl group on adenosine at position 37 (t(6)A37) in tRNAs that read codons beginning with adenine. Is involved in the transfer of the threonylcarbamoyl moiety of threonylcarbamoyl-AMP (TC-AMP) to the N6 group of A37, together with TsaE and TsaB. TsaD likely plays a direct catalytic role in this reaction. The chain is tRNA N6-adenosine threonylcarbamoyltransferase from Vibrio parahaemolyticus serotype O3:K6 (strain RIMD 2210633).